A 578-amino-acid chain; its full sequence is Probable nucleoredoxin 1 (578 aa).

3 consecutive Thioredoxin domains span residues 18-172 (SLLS…RARR), 178-321 (SVLV…EKFQ), and 325-485 (ELEK…EIEA).

It belongs to the nucleoredoxin family.

The enzyme catalyses [protein]-dithiol + NAD(+) = [protein]-disulfide + NADH + H(+). It catalyses the reaction [protein]-dithiol + NADP(+) = [protein]-disulfide + NADPH + H(+). Probable thiol-disulfide oxidoreductase required for pollen tube growth and pollen function in the pistil. Seems not to be required for in vitro pollen tube growth. May be involved in the generation of lipid signaling molecules in pistil. This is Probable nucleoredoxin 1 from Arabidopsis thaliana (Mouse-ear cress).